A 460-amino-acid chain; its full sequence is T-box transcription factor TBX1 (460 aa).

Disordered regions lie at residues 30-53 (LNTP…ESQF) and 67-99 (GSNS…TLVK). Positions 67–84 (GSNSAQAPAQGDSGTSNC) are enriched in polar residues. Positions 116-294 (LWDEFNQLGT…SNPFAKGFRD (179 aa)) form a DNA-binding region, T-box. Disordered regions lie at residues 317 to 355 (RTRN…DPTH) and 376 to 400 (PLTA…PDTL). Polar residues predominate over residues 320 to 330 (NPMSSPPQQNG). Positions 331–344 (TEKEDSRREYDRDP) are enriched in basic and acidic residues. A Nuclear localization signal motif is present at residues 418 to 429 (KTRPSPYPSPSI).

Binds DNA as a dimer. Expressed in the ear and mesendodermal components of pharyngeal arches.

It is found in the nucleus. Functionally, probable transcriptional regulator involved in developmental processes. Binds to the palindromic T site 5'-TTCACACCTAGGTGTGAA-3' DNA sequence. Is required for normal development of the pharyngeal arch arteries. Acts cell autonomously in the pharyngeal mesendoderm and influences the development of neural crest-derived cartilages secondarily. In Danio rerio (Zebrafish), this protein is T-box transcription factor TBX1 (tbx1).